Consider the following 174-residue polypeptide: NADH-quinone oxidoreductase subunit B 2 (174 aa).

[4Fe-4S] cluster-binding residues include Cys-53, Cys-54, Cys-118, and Cys-148.

The protein belongs to the complex I 20 kDa subunit family. NDH-1 is composed of 14 different subunits. Subunits NuoB, C, D, E, F, and G constitute the peripheral sector of the complex. Requires [4Fe-4S] cluster as cofactor.

It localises to the cell inner membrane. The enzyme catalyses a quinone + NADH + 5 H(+)(in) = a quinol + NAD(+) + 4 H(+)(out). In terms of biological role, NDH-1 shuttles electrons from NADH, via FMN and iron-sulfur (Fe-S) centers, to quinones in the respiratory chain. Couples the redox reaction to proton translocation (for every two electrons transferred, four hydrogen ions are translocated across the cytoplasmic membrane), and thus conserves the redox energy in a proton gradient. The protein is NADH-quinone oxidoreductase subunit B 2 of Cereibacter sphaeroides (strain ATCC 17025 / ATH 2.4.3) (Rhodobacter sphaeroides).